We begin with the raw amino-acid sequence, 321 residues long: Protein translocase subunit SecF (321 aa).

6 helical membrane passes run 23 to 43 (VWLI…FSWT), 158 to 178 (LQTT…YISI), 189 to 209 (LLAL…LGII), 217 to 237 (LFAV…VVVF), 258 to 280 (FAVS…PLIA), and 290 to 312 (YWFA…ALVP).

This sequence belongs to the SecD/SecF family. SecF subfamily. In terms of assembly, forms a complex with SecD. Part of the essential Sec protein translocation apparatus which comprises SecA, SecYEG and auxiliary proteins SecDF. Other proteins may also be involved.

The protein localises to the cell inner membrane. In terms of biological role, part of the Sec protein translocase complex. Interacts with the SecYEG preprotein conducting channel. SecDF uses the proton motive force (PMF) to complete protein translocation after the ATP-dependent function of SecA. Its function is as follows. Probably participates in protein translocation into and across both the cytoplasmic and thylakoid membranes in cyanobacterial cells. In Prochlorococcus marinus (strain SARG / CCMP1375 / SS120), this protein is Protein translocase subunit SecF.